The sequence spans 299 residues: Xyloglucan endotransglucosylase protein 6 (299 aa).

A signal peptide spans 1-25 (MASSLTLPMAMAFTLLALSFASAMG). The region spanning 26 to 219 (GSMNSSRFDE…WSHAPFVASY (194 aa)) is the GH16 domain. Glu105 acts as the Nucleophile in catalysis. Glu109 functions as the Proton donor in the catalytic mechanism. Residue Glu109 coordinates xyloglucan. An N-linked (GlcNAc...) asparagine glycan is attached at Asn113. Xyloglucan contacts are provided by residues 122-124 (QTN), 132-134 (NRE), 198-199 (DW), and Gly203. 2 disulfides stabilise this stretch: Cys227–Cys242 and Cys281–Cys294. Arg286 is a xyloglucan binding site.

Belongs to the glycosyl hydrolase 16 family. XTH group 1 subfamily. In terms of processing, contains at least one intrachain disulfide bond essential for its enzymatic activity. Highest expression in ripe leaves after full expansion. Also expressed in fruits, and at a lower level in flowers and stems (picked at anthesis).

The protein localises to the secreted. Its subcellular location is the cell wall. It is found in the extracellular space. The protein resides in the apoplast. It catalyses the reaction breaks a beta-(1-&gt;4) bond in the backbone of a xyloglucan and transfers the xyloglucanyl segment on to O-4 of the non-reducing terminal glucose residue of an acceptor, which can be a xyloglucan or an oligosaccharide of xyloglucan.. Functionally, catalyzes xyloglucan endotransglycosylation (XET). Cleaves and religates xyloglucan polymers. Does not catalyze xyloglucan endohydrolysis (XEH). Probably involved in cell wall restructuring during postharvest fruit softening. The protein is Xyloglucan endotransglucosylase protein 6 of Diospyros kaki (Kaki persimmon).